Consider the following 158-residue polypeptide: Endoribonuclease YbeY (158 aa).

Residues His124, His128, and His134 each contribute to the Zn(2+) site.

It belongs to the endoribonuclease YbeY family. Zn(2+) is required as a cofactor.

The protein resides in the cytoplasm. Its function is as follows. Single strand-specific metallo-endoribonuclease involved in late-stage 70S ribosome quality control and in maturation of the 3' terminus of the 16S rRNA. This Latilactobacillus sakei subsp. sakei (strain 23K) (Lactobacillus sakei subsp. sakei) protein is Endoribonuclease YbeY.